Consider the following 201-residue polypeptide: Peptidyl-tRNA hydrolase (201 aa).

Tyr-14 is a tRNA binding site. The Proton acceptor role is filled by His-19. 3 residues coordinate tRNA: Tyr-64, Asn-66, and Asn-112.

Belongs to the PTH family. Monomer.

The protein localises to the cytoplasm. The catalysed reaction is an N-acyl-L-alpha-aminoacyl-tRNA + H2O = an N-acyl-L-amino acid + a tRNA + H(+). Its function is as follows. Hydrolyzes ribosome-free peptidyl-tRNAs (with 1 or more amino acids incorporated), which drop off the ribosome during protein synthesis, or as a result of ribosome stalling. Functionally, catalyzes the release of premature peptidyl moieties from peptidyl-tRNA molecules trapped in stalled 50S ribosomal subunits, and thus maintains levels of free tRNAs and 50S ribosomes. In Bradyrhizobium diazoefficiens (strain JCM 10833 / BCRC 13528 / IAM 13628 / NBRC 14792 / USDA 110), this protein is Peptidyl-tRNA hydrolase.